We begin with the raw amino-acid sequence, 360 residues long: ACT1-like protein (360 aa).

The disordered stretch occupies residues 339–360 (KKQSHNNANDHHEDSMNYSITQ).

In terms of assembly, interacts with the receptor complex composed of ilcr-1 and ilcr-2. Also interacts with pik-1. Expressed in neurons.

May act as an adapter to facilitate downstream signaling for the receptor complex composed of ilcr-1 and ilcr-2, which is a signaling complex that modulates neuronal activity and animal behavior in response to sensory neuron input. The protein is ACT1-like protein of Caenorhabditis elegans.